Reading from the N-terminus, the 248-residue chain is Ubiquinone/menaquinone biosynthesis C-methyltransferase UbiE (248 aa).

Residues S68 and D92 each coordinate S-adenosyl-L-methionine.

Belongs to the class I-like SAM-binding methyltransferase superfamily. MenG/UbiE family.

It catalyses the reaction a 2-demethylmenaquinol + S-adenosyl-L-methionine = a menaquinol + S-adenosyl-L-homocysteine + H(+). The enzyme catalyses a 2-methoxy-6-(all-trans-polyprenyl)benzene-1,4-diol + S-adenosyl-L-methionine = a 5-methoxy-2-methyl-3-(all-trans-polyprenyl)benzene-1,4-diol + S-adenosyl-L-homocysteine + H(+). Its pathway is quinol/quinone metabolism; menaquinone biosynthesis; menaquinol from 1,4-dihydroxy-2-naphthoate: step 2/2. The protein operates within cofactor biosynthesis; ubiquinone biosynthesis. In terms of biological role, methyltransferase required for the conversion of demethylmenaquinol (DMKH2) to menaquinol (MKH2) and the conversion of 2-polyprenyl-6-methoxy-1,4-benzoquinol (DDMQH2) to 2-polyprenyl-3-methyl-6-methoxy-1,4-benzoquinol (DMQH2). This chain is Ubiquinone/menaquinone biosynthesis C-methyltransferase UbiE, found in Rickettsia conorii (strain ATCC VR-613 / Malish 7).